A 235-amino-acid polypeptide reads, in one-letter code: Adapter protein MecA (235 aa).

A compositionally biased stretch (basic and acidic residues) spans 113–135; that stretch reads LRQSDKGDIVKSKVSSSDHKDGS. Residues 113-136 form a disordered region; that stretch reads LRQSDKGDIVKSKVSSSDHKDGSQ.

It belongs to the MecA family. Homodimer.

Functionally, enables the recognition and targeting of unfolded and aggregated proteins to the ClpC protease or to other proteins involved in proteolysis. This is Adapter protein MecA from Leuconostoc mesenteroides subsp. mesenteroides (strain ATCC 8293 / DSM 20343 / BCRC 11652 / CCM 1803 / JCM 6124 / NCDO 523 / NBRC 100496 / NCIMB 8023 / NCTC 12954 / NRRL B-1118 / 37Y).